A 394-amino-acid chain; its full sequence is Elongation factor Tu 1 (394 aa).

One can recognise a tr-type G domain in the interval 10–204; that stretch reads KPHVNVGTIG…ALDTYIPEPE (195 aa). Residues 19–26 form a G1 region; the sequence is GHVDHGKT. 19 to 26 is a binding site for GTP; it reads GHVDHGKT. A Mg(2+)-binding site is contributed by T26. Residues 60-64 are G2; sequence GITIS. Residues 81 to 84 form a G3 region; sequence DCPG. Residues 81–85 and 136–139 each bind GTP; these read DCPGH and NKCD. The interval 136–139 is G4; sequence NKCD. The interval 174–176 is G5; that stretch reads SAL.

Belongs to the TRAFAC class translation factor GTPase superfamily. Classic translation factor GTPase family. EF-Tu/EF-1A subfamily. Monomer.

The protein resides in the cytoplasm. It carries out the reaction GTP + H2O = GDP + phosphate + H(+). In terms of biological role, GTP hydrolase that promotes the GTP-dependent binding of aminoacyl-tRNA to the A-site of ribosomes during protein biosynthesis. This is Elongation factor Tu 1 from Vibrio vulnificus (strain CMCP6).